The following is a 114-amino-acid chain: NLP effector protein 1 (114 aa).

The protein belongs to the Necrosis inducing protein (NPP1) family.

Its subcellular location is the secreted. It is found in the host cytoplasm. Probable secreted effector that may act as a pathogen-associated molecular pattern (PAMP) recognized by the plant immune system. Seems not to induce necrosis, neither in several susceptible or resistant Vitis species nor in the dicot model plant Nicotiana benthamiana. The polypeptide is NLP effector protein 1 (Plasmopara viticola (Downy mildew of grapevine)).